The primary structure comprises 364 residues: Methylthioribose-1-phosphate isomerase (364 aa).

The active-site Proton donor is the D254.

The protein belongs to the eIF-2B alpha/beta/delta subunits family. MtnA subfamily.

It localises to the cytoplasm. Its subcellular location is the nucleus. It catalyses the reaction 5-(methylsulfanyl)-alpha-D-ribose 1-phosphate = 5-(methylsulfanyl)-D-ribulose 1-phosphate. The protein operates within amino-acid biosynthesis; L-methionine biosynthesis via salvage pathway; L-methionine from S-methyl-5-thio-alpha-D-ribose 1-phosphate: step 1/6. Functionally, catalyzes the interconversion of methylthioribose-1-phosphate (MTR-1-P) into methylthioribulose-1-phosphate (MTRu-1-P). The polypeptide is Methylthioribose-1-phosphate isomerase (Drosophila sechellia (Fruit fly)).